The following is a 7031-amino-acid chain: Extracellular matrix-binding protein EbhB (7031 aa).

Positions 1-39 (MNYRDKIQKFSIRKYTVGTFSTVIATLVFLGFNTSQAHA) are cleaved as a signal peptide. Positions 41–59 (ETNQPASVVKQKQQSNNEQ) are enriched in polar residues. Disordered stretches follow at residues 41-86 (ETNQ…HENE), 99-152 (KVAQ…GNDN), 250-277 (PQRQ…PRSV), 1342-1373 (NNIT…ATTD), and 2418-2438 (TITP…TLTA). Low complexity predominate over residues 65-80 (SQVQNSQNSQNGQSLS). A compositionally biased stretch (polar residues) spans 99–117 (KVAQSSTTNDEQPASQNVN). Positions 130–140 (PDKEQSKHKQN) are enriched in basic and acidic residues. 4 stretches are compositionally biased toward polar residues: residues 141-151 (ESQSANKNGND), 250-266 (PQRQ…QTRS), 1360-1373 (FRTT…ATTD), and 2427-2438 (HSVSSNPSTLTA). 38 FIVAR domains span residues 2524–2580 (AKNH…VSDA), 2610–2666 (SKNN…ISDE), 2687–2750 (DTHA…VQSA), 2780–2836 (AKTK…IAAE), 2864–2919 (AKTQ…IRQN), 2947–3002 (AKNQ…INTN), 3030–3085 (AKTQ…INDK), 3154–3212 (AMTK…VNQK), 3280–3339 (AMTG…VNNA), 3407–3465 (AMGN…VNRA), 3533–3591 (AMGN…VTEA), 3659–3717 (AMNT…ITQK), 3785–3843 (AMAS…VEAA), 3911–3969 (AMGN…VEQA), 4037–4095 (AMGT…VTAA), 4163–4221 (AMKG…ITQA), 4289–4347 (QMGN…VEAA), 4415–4473 (AMAN…VENA), 4541–4599 (AMGT…INQI), 4667–4725 (AMGQ…VDRA), 4793–4851 (AMNS…VDNA), 4919–4977 (AMGA…INGM), 5045–5103 (AMTA…VNSA), 5171–5229 (AMKG…ITQV), 5297–5355 (AMHS…VEQA), 5423–5481 (AMGQ…VERA), 5549–5607 (AMTA…VTNA), 5675–5733 (AMKG…INQA), 5801–5859 (AMTN…VETA), 5927–5985 (AMSN…VEQA), 6053–6111 (AMNQ…INQK), 6179–6236 (AMGN…VQAA), 6304–6362 (AMGQ…VEAA), 6430–6488 (AMQR…VEQA), 6556–6614 (AMDQ…VTAA), 6682–6740 (AMNQ…VTQA), 6818–6866 (DKDQ…VEAA), and 6934–6992 (AMGN…VEAA).

In Staphylococcus aureus (strain Newman), this protein is Extracellular matrix-binding protein EbhB (ebhB).